Here is a 447-residue protein sequence, read N- to C-terminus: NADP-specific glutamate dehydrogenase (447 aa).

Substrate contacts are provided by K92, Q113, and K116. K128 serves as the catalytic Proton donor. Residue G167 coordinates substrate. Residues T212 and N243 each coordinate NADP(+). S379 lines the substrate pocket.

Belongs to the Glu/Leu/Phe/Val dehydrogenases family. Homohexamer.

It carries out the reaction L-glutamate + NADP(+) + H2O = 2-oxoglutarate + NH4(+) + NADPH + H(+). Catalyzes the reversible oxidative deamination of glutamate to alpha-ketoglutarate and ammonia. The protein is NADP-specific glutamate dehydrogenase (gdh) of Corynebacterium efficiens (strain DSM 44549 / YS-314 / AJ 12310 / JCM 11189 / NBRC 100395).